The primary structure comprises 413 residues: CinA-like protein (413 aa).

The protein belongs to the CinA family.

This Geotalea daltonii (strain DSM 22248 / JCM 15807 / FRC-32) (Geobacter daltonii) protein is CinA-like protein.